A 358-amino-acid polypeptide reads, in one-letter code: cAMP-dependent protein kinase catalytic subunit PRKX (358 aa).

The residue at position 1 (Met1) is an N-acetylmethionine. Residues 1-34 form a disordered region; sequence MEAPGLAQAAAAESDSRKVAEETPDGAPALCPSP. In terms of domain architecture, Protein kinase spans 49–303; the sequence is FDTLATVGTG…ANDVKHHRWF (255 aa). Residues 55–63 and Lys78 contribute to the ATP site; that span reads VGTGTFGRV. Asp172 acts as the Proton acceptor in catalysis. Residue Thr203 is modified to Phosphothreonine. An AGC-kinase C-terminal domain is found at 304–358; it reads RSVDWEAVPQRKLKPPIVPKIAGDGDTSNFETYPENDWDTAAPVPQKDLEIFKNF.

This sequence belongs to the protein kinase superfamily. AGC Ser/Thr protein kinase family. cAMP subfamily. As to quaternary structure, like other cAMP-dependent protein kinases, the inactive holoenzyme is probably composed of 2 PRKX catalytic subunits and a dimer of regulatory subunits. Interacts (cAMP-dependent) specifically with the regulatory subunits PRKAR1A and PRKAR1B. Compared to other cAMP-dependent serine/threonine protein kinases, does not interact with the 2 other PKA regulatory subunits PRKAR2A and PRKAR2B. Interacts with cAMP-dependent protein kinase inhibitor/PKI proteins; inhibits PRKX. Interacts with GPKOW. Interacts with SMAD6. Interacts with PKD1; involved in differentiation and controlled morphogenesis of the kidney. Interacts with PIN1 (via WW domain). In terms of processing, phosphorylated; autophosphorylates in vitro. As to expression, widely expressed (at protein level). Specifically expressed in blood by macrophages and granulocytes according to PubMed:9860982.

It localises to the cytoplasm. The protein localises to the nucleus. The catalysed reaction is L-seryl-[protein] + ATP = O-phospho-L-seryl-[protein] + ADP + H(+). The enzyme catalyses L-threonyl-[protein] + ATP = O-phospho-L-threonyl-[protein] + ADP + H(+). With respect to regulation, binding of cAMP to the PRKAR1A or PRKAR1B regulatory subunits induces dissociation of the holoenzyme heterotetramer. The released monomeric PRKX is then active and able to phosphorylate its substrates. In terms of biological role, serine/threonine protein kinase regulated by and mediating cAMP signaling in cells. Acts through phosphorylation of downstream targets that may include CREB, SMAD6 and PKD1 and has multiple functions in cellular differentiation and epithelial morphogenesis. Regulates myeloid cell differentiation through SMAD6 phosphorylation. Involved in nephrogenesis by stimulating renal epithelial cell migration and tubulogenesis. Also involved in angiogenesis through stimulation of endothelial cell proliferation, migration and vascular-like structure formation. This chain is cAMP-dependent protein kinase catalytic subunit PRKX (PRKX), found in Homo sapiens (Human).